A 367-amino-acid polypeptide reads, in one-letter code: UDP-N-acetylglucosamine--N-acetylmuramyl-(pentapeptide) pyrophosphoryl-undecaprenol N-acetylglucosamine transferase (367 aa).

Residues 15–17 (TGG), asparagine 127, arginine 163, serine 191, isoleucine 249, and glutamine 294 contribute to the UDP-N-acetyl-alpha-D-glucosamine site.

It belongs to the glycosyltransferase 28 family. MurG subfamily.

The protein localises to the cell inner membrane. The enzyme catalyses di-trans,octa-cis-undecaprenyl diphospho-N-acetyl-alpha-D-muramoyl-L-alanyl-D-glutamyl-meso-2,6-diaminopimeloyl-D-alanyl-D-alanine + UDP-N-acetyl-alpha-D-glucosamine = di-trans,octa-cis-undecaprenyl diphospho-[N-acetyl-alpha-D-glucosaminyl-(1-&gt;4)]-N-acetyl-alpha-D-muramoyl-L-alanyl-D-glutamyl-meso-2,6-diaminopimeloyl-D-alanyl-D-alanine + UDP + H(+). Its pathway is cell wall biogenesis; peptidoglycan biosynthesis. Cell wall formation. Catalyzes the transfer of a GlcNAc subunit on undecaprenyl-pyrophosphoryl-MurNAc-pentapeptide (lipid intermediate I) to form undecaprenyl-pyrophosphoryl-MurNAc-(pentapeptide)GlcNAc (lipid intermediate II). The sequence is that of UDP-N-acetylglucosamine--N-acetylmuramyl-(pentapeptide) pyrophosphoryl-undecaprenol N-acetylglucosamine transferase from Burkholderia thailandensis (strain ATCC 700388 / DSM 13276 / CCUG 48851 / CIP 106301 / E264).